Reading from the N-terminus, the 117-residue chain is PWLVGWWDQFKRMLNRELTHLSEMSRSGNQVSEYISTTFLDKQNEVEIPSPTMKDREPQEAPRQRPCQQLPPPVPHLQPMSQITGVKRLSHNSGLNNASIPRFGVKTDQEELLAQEL.

The interval 42 to 79 (KQNEVEIPSPTMKDREPQEAPRQRPCQQLPPPVPHLQP) is disordered. Residues 53–63 (MKDREPQEAPR) are compositionally biased toward basic and acidic residues. The segment at 78–117 (QPMSQITGVKRLSHNSGLNNASIPRFGVKTDQEELLAQEL) is catalytic.

It belongs to the cyclic nucleotide phosphodiesterase family. PDE4 subfamily. Interacts with LYN (via SH3 domain). Interacts with ARRB2. Zn(2+) serves as cofactor. Requires Mg(2+) as cofactor. The cofactor is Mn(2+). Proteolytically cleaved by CASP3.

The protein resides in the cytoplasm. Its subcellular location is the cytosol. It is found in the membrane. It carries out the reaction 3',5'-cyclic AMP + H2O = AMP + H(+). Its pathway is purine metabolism; 3',5'-cyclic AMP degradation; AMP from 3',5'-cyclic AMP: step 1/1. In terms of biological role, hydrolyzes the second messenger 3',5'-cyclic AMP (cAMP), which is a key regulator of many important physiological processes. This is 3',5'-cyclic-AMP phosphodiesterase 4A (PDE4A) from Cavia porcellus (Guinea pig).